Here is a 390-residue protein sequence, read N- to C-terminus: Phosphopentomutase (390 aa).

Residues aspartate 10, aspartate 284, histidine 289, aspartate 325, histidine 326, and histidine 337 each contribute to the Mn(2+) site.

This sequence belongs to the phosphopentomutase family. Mn(2+) serves as cofactor.

The protein resides in the cytoplasm. The catalysed reaction is 2-deoxy-alpha-D-ribose 1-phosphate = 2-deoxy-D-ribose 5-phosphate. It carries out the reaction alpha-D-ribose 1-phosphate = D-ribose 5-phosphate. It participates in carbohydrate degradation; 2-deoxy-D-ribose 1-phosphate degradation; D-glyceraldehyde 3-phosphate and acetaldehyde from 2-deoxy-alpha-D-ribose 1-phosphate: step 1/2. Its function is as follows. Isomerase that catalyzes the conversion of deoxy-ribose 1-phosphate (dRib-1-P) and ribose 1-phosphate (Rib-1-P) to deoxy-ribose 5-phosphate (dRib-5-P) and ribose 5-phosphate (Rib-5-P), respectively. The polypeptide is Phosphopentomutase (Clostridioides difficile (strain 630) (Peptoclostridium difficile)).